Here is an 83-residue protein sequence, read N- to C-terminus: MVTIRLARGGAKKRPFYNIVVADSRNARDGRFIERVGFFNPMARGQEETLRLDLDRVEHWVTNGAGTSERVAKLIKDARKAAA.

The protein belongs to the bacterial ribosomal protein bS16 family.

The protein is Small ribosomal subunit protein bS16 of Shewanella woodyi (strain ATCC 51908 / MS32).